A 368-amino-acid polypeptide reads, in one-letter code: N-acetylneuraminate epimerase (368 aa).

Residues Met1 to Ala19 form the signal peptide. Kelch repeat units lie at residues Thr40 to Asp84, Asn86 to Asn137, Lys139 to Ala173, His174 to Gly219, Thr222 to Gly265, Glu287 to Asn336, and Leu338 to Gln367. Glu228 (proton acceptor) is an active-site residue.

Belongs to the NanM family. As to quaternary structure, homodimer.

It is found in the periplasm. The enzyme catalyses N-acetyl-alpha-neuraminate = N-acetyl-beta-neuraminate. Its function is as follows. Converts alpha-N-acetylneuranimic acid (Neu5Ac) to the beta-anomer, accelerating the equilibrium between the alpha- and beta-anomers. Probably facilitates sialidase-negative bacteria to compete successfully for limited amounts of extracellular Neu5Ac, which is likely taken up in the beta-anomer. In addition, the rapid removal of sialic acid from solution might be advantageous to the bacterium to damp down host responses. In Escherichia coli O1:K1 / APEC, this protein is N-acetylneuraminate epimerase.